The primary structure comprises 143 residues: MAKKIIGYIKLQVPAGKANPSPPIGPALGQRGLNIMEFCKAFNAKTQGLEPGLPIPVVITAFADKSFTFIMKTPPATILIKKAAGIQKGSPKPHTDKVGSISRAQVEEIAKTKMPDLTAADMEAAVRTIAGSARSMGITVEGL.

The protein belongs to the universal ribosomal protein uL11 family. As to quaternary structure, part of the ribosomal stalk of the 50S ribosomal subunit. Interacts with L10 and the large rRNA to form the base of the stalk. L10 forms an elongated spine to which L12 dimers bind in a sequential fashion forming a multimeric L10(L12)X complex. In terms of processing, one or more lysine residues are methylated.

Forms part of the ribosomal stalk which helps the ribosome interact with GTP-bound translation factors. This chain is Large ribosomal subunit protein uL11, found in Azoarcus sp. (strain BH72).